The chain runs to 293 residues: Ribosomal RNA small subunit methyltransferase H (293 aa).

S-adenosyl-L-methionine contacts are provided by residues 31–33 (GGY), Asp-49, Phe-76, Asp-97, and Gln-104.

This sequence belongs to the methyltransferase superfamily. RsmH family.

It localises to the cytoplasm. It catalyses the reaction cytidine(1402) in 16S rRNA + S-adenosyl-L-methionine = N(4)-methylcytidine(1402) in 16S rRNA + S-adenosyl-L-homocysteine + H(+). In terms of biological role, specifically methylates the N4 position of cytidine in position 1402 (C1402) of 16S rRNA. This Wolbachia sp. subsp. Drosophila simulans (strain wRi) protein is Ribosomal RNA small subunit methyltransferase H.